Reading from the N-terminus, the 126-residue chain is Thioredoxin H-type 1 (126 aa).

Residues 2-120 (AANDATSSEE…LQQTIVKHAA (119 aa)) enclose the Thioredoxin domain. Residues Cys46 and Cys49 each act as nucleophile in the active site. Cys46 and Cys49 form a disulfide bridge.

It belongs to the thioredoxin family. Plant H-type subfamily.

It is found in the cytoplasm. Participates in various redox reactions through the reversible oxidation of the active center dithiol to a disulfide. The H form is known to activate a number of cytosolic enzymes. This is Thioredoxin H-type 1 from Nicotiana tabacum (Common tobacco).